The chain runs to 334 residues: Holliday junction branch migration complex subunit RuvB (334 aa).

The segment at 4-186 (ADRLIAPISN…FGIVQRLEYY (183 aa)) is large ATPase domain (RuvB-L). Residues Ile25, Arg26, Gly67, Lys70, Thr71, Thr72, 133–135 (EDY), Arg176, Tyr186, and Arg223 contribute to the ATP site. A Mg(2+)-binding site is contributed by Thr71. The tract at residues 187 to 257 (KVADLQHIVQ…TADRALNMLD (71 aa)) is small ATPAse domain (RuvB-S). Positions 260-334 (HQGFDYMDRK…RAYLHFGIEK (75 aa)) are head domain (RuvB-H). Arg315 and Arg320 together coordinate DNA.

Belongs to the RuvB family. As to quaternary structure, homohexamer. Forms an RuvA(8)-RuvB(12)-Holliday junction (HJ) complex. HJ DNA is sandwiched between 2 RuvA tetramers; dsDNA enters through RuvA and exits via RuvB. An RuvB hexamer assembles on each DNA strand where it exits the tetramer. Each RuvB hexamer is contacted by two RuvA subunits (via domain III) on 2 adjacent RuvB subunits; this complex drives branch migration. In the full resolvosome a probable DNA-RuvA(4)-RuvB(12)-RuvC(2) complex forms which resolves the HJ.

It is found in the cytoplasm. It catalyses the reaction ATP + H2O = ADP + phosphate + H(+). The RuvA-RuvB-RuvC complex processes Holliday junction (HJ) DNA during genetic recombination and DNA repair, while the RuvA-RuvB complex plays an important role in the rescue of blocked DNA replication forks via replication fork reversal (RFR). RuvA specifically binds to HJ cruciform DNA, conferring on it an open structure. The RuvB hexamer acts as an ATP-dependent pump, pulling dsDNA into and through the RuvAB complex. RuvB forms 2 homohexamers on either side of HJ DNA bound by 1 or 2 RuvA tetramers; 4 subunits per hexamer contact DNA at a time. Coordinated motions by a converter formed by DNA-disengaged RuvB subunits stimulates ATP hydrolysis and nucleotide exchange. Immobilization of the converter enables RuvB to convert the ATP-contained energy into a lever motion, pulling 2 nucleotides of DNA out of the RuvA tetramer per ATP hydrolyzed, thus driving DNA branch migration. The RuvB motors rotate together with the DNA substrate, which together with the progressing nucleotide cycle form the mechanistic basis for DNA recombination by continuous HJ branch migration. Branch migration allows RuvC to scan DNA until it finds its consensus sequence, where it cleaves and resolves cruciform DNA. The protein is Holliday junction branch migration complex subunit RuvB of Vibrio cholerae serotype O1 (strain ATCC 39315 / El Tor Inaba N16961).